Consider the following 261-residue polypeptide: Syntaxin-7 (261 aa).

The residue at position 2 (Ser2) is an N-acetylserine. At 2 to 238 (SYTPGVGGDP…DYQRKSRKTL (237 aa)) the chain is on the cytoplasmic side. A Phosphothreonine modification is found at Thr4. The residue at position 45 (Ser45) is a Phosphoserine. Residues 47–69 (ELRQQLQQKQQYTNQLTKETDKY) are a coiled coil. Position 75 is a phosphoserine (Ser75). Thr79 carries the post-translational modification Phosphothreonine. 4 positions are modified to phosphoserine: Ser125, Ser126, Ser129, and Ser205. The tract at residues 129–148 (SGSFPEDSSKERNLVSWESQ) is disordered. One can recognise a t-SNARE coiled-coil homology domain in the interval 165–227 (LRLIHERESS…QQANQQLSRA (63 aa)). A helical; Anchor for type IV membrane protein membrane pass occupies residues 239–259 (CIIILILVIGVVIIGLIIWGL). Residues 260-261 (NR) are Vesicular-facing.

The protein belongs to the syntaxin family. Forms a SNARE complex with VTI1B, STX8 and VAMP8 which functions in the homotypic fusion of late endosomes. Component of the SNARE complex composed of STX7, STX8, VAMP7 and VTI1B that is required for heterotypic fusion of late endosomes with lysosomes. Interacts with VPS11, VPS16 and VPS18. Interacts with VPS33A. Interacts with TPC1.

It is found in the early endosome membrane. May be involved in protein trafficking from the plasma membrane to the early endosome (EE) as well as in homotypic fusion of endocytic organelles. Mediates the endocytic trafficking from early endosomes to late endosomes and lysosomes. The protein is Syntaxin-7 (STX7) of Pongo abelii (Sumatran orangutan).